A 1213-amino-acid polypeptide reads, in one-letter code: METTEEVVAPATTQQPATEVGSAKPTTSTYSKKQKKPKATTTTTTTDGTTPTHNEHASAKDPRKAQDDQVMGTNNSSIVSKRSVEKLYYPNEPHFFRFFVKKFQRRAPLINRGYHFRLHVIDVLVRNFLQEQRTGDAKGKRKVVVNLGCGSDVLPWQCLARYPDACRSGEKDGAKFVDVDFPDLIERKKRTVLETPELLGPLTNVVVPEFAPVPSTPAATTTAAATTTTTTELKTTAATASSTSTEAPQKPKKSPKPKDKSKAARAPAPTTAPTGIVFTSDQYVQIGCDLRDLATLQDSLTRAVGGDLSSCTFLFVAEVSITYMETPGADAVIQWASSLGDSEFVLLEQLLPSGPTHPFASTMLSHFHKLNTPIKSVDVYPTVASQVERFRSRGWGSGDVRVWTLWEAWADAEDTFVNAAERRRLDEVEPFDEWEEFALFASHYCVVRARTVARDGQNKKKERGIPNGRELGLPVEKVKVRWDDVPGQRGQRRFAAGAVLTSSSPSSEKKEEVKLLNVMGLGTKSRLQNCDVYGRKKVGDADEADGTDEEKTAVPFTFREGGPSTRMCHSLTDFGTAQLLVGGRASPSTPLKDCWLLEKTNGSESEWAWKRTNDLPIPLYRHSVTRLGKTDMALLAGGRGVADIFPDWLLYEPKLGWIRCEIAGDVKPTSVYGATLACLRQESDSFSGVFTGGLSDDGLIADQLLAWNLDVSNSSRPVVTFVPLQVKSGDDGREEALSRLLLTRFGASCLPQSRTDFLVFGGVIKDHLLDMEDEILLCSLKGDGELTITRRLVPEAANAKSPSHPGPLLLVGTSPVVTPDDGSLMIVGGGATCFSMGTFWNKGISTLELALPAAVENEASPIPAYGWVHEKTVDIIPGEPRSLPLRNQAPNGAEGNANGSVSVRIQPIPRVRLENAEDFARIVREGRPVVLEGLNLGDCVSQWGNGDYVAKKVGTDRKVVIHESTTPAMDFTTKNFRYVTTEFGDFMRRVEKGDRLYLRALSTDKPTEKPAVLSDDFPSLATDFVLPPELALVGDRLFSSVLRVSGPVNMWLHYDVMANVYCQIGGSKRMILFPPSDVEHLGFAPGASSSSIDVFSTLFGESSDSRYLAQVTHPHEAVMTPGDVLFLPPLWLHTATPTSDSSIAVNVFFRDLEGGCYAAGKDVYGNRDLAAYEKGRTDLTRIANSFQKLPAEAREFYLLRLADELRRKAKGAQ.

Composition is skewed to low complexity over residues 1 to 13 (METT…PATT) and 39 to 52 (ATTT…TTPT). The disordered stretch occupies residues 1–76 (METTEEVVAP…DDQVMGTNNS (76 aa)). The span at 53 to 67 (HNEHASAKDPRKAQD) shows a compositional bias: basic and acidic residues. S-adenosyl-L-methionine contacts are provided by arginine 117, glycine 148, and aspartate 180. The segment covering 215 to 248 (STPAATTTAAATTTTTTELKTTAATASSTSTEAP) has biased composition (low complexity). Positions 215–272 (STPAATTTAAATTTTTTELKTTAATASSTSTEAPQKPKKSPKPKDKSKAARAPAPTTA) are disordered. S-adenosyl-L-methionine contacts are provided by residues 289–290 (DL) and glutamate 318. The disordered stretch occupies residues 879–900 (EPRSLPLRNQAPNGAEGNANGS). One can recognise a JmjC domain in the interval 1006 to 1166 (PTEKPAVLSD…YAAGKDVYGN (161 aa)).

Belongs to the methyltransferase superfamily. LCMT family.

It carries out the reaction 7-[(3S)-3-amino-3-carboxypropyl]wyosine(37) in tRNA(Phe) + S-adenosyl-L-methionine = 7-[(3S)-(3-amino-3-methoxycarbonyl)propyl]wyosine(37) in tRNA(Phe) + S-adenosyl-L-homocysteine. The catalysed reaction is 7-[(3S)-(3-amino-3-methoxycarbonyl)propyl]wyosine(37) in tRNA(Phe) + S-adenosyl-L-methionine + CO2 = wybutosine(37) in tRNA(Phe) + S-adenosyl-L-homocysteine + 2 H(+). It participates in tRNA modification; wybutosine-tRNA(Phe) biosynthesis. Functionally, probable S-adenosyl-L-methionine-dependent methyltransferase that acts as a component of the wybutosine biosynthesis pathway. Wybutosine is a hyper modified guanosine with a tricyclic base found at the 3'-position adjacent to the anticodon of eukaryotic phenylalanine tRNA. May methylate the carboxyl group of leucine residues to form alpha-leucine ester residues. The chain is tRNA wybutosine-synthesizing protein 4 (lcm-2) from Neurospora crassa (strain ATCC 24698 / 74-OR23-1A / CBS 708.71 / DSM 1257 / FGSC 987).